We begin with the raw amino-acid sequence, 714 residues long: Protein spire homolog 2 (714 aa).

One can recognise a KIND domain in the interval 22 to 203 (LSLEEVLKAY…RALFVETLEL (182 aa)). Positions 136 to 162 (DSEDSGCGAADEGYGGPEEEEEAEGVP) are disordered. 3 consecutive WH2 domains span residues 248-262 (QLMR…LKKV), 278-296 (PFEM…LRKV), and 342-359 (LHEK…LRPV). Phosphoserine occurs at positions 371, 440, 442, and 476. The interval 453–516 (VASGLQSATH…SSGDRPEASM (64 aa)) is disordered. Positions 486–496 (DQGTCPASVSD) are enriched in polar residues. The interval 534–554 (LALTVEEVMDVRRVLVKAEME) is spir-box.

The protein belongs to the spire family.

It is found in the cytoplasm. Its subcellular location is the cytoskeleton. The protein localises to the cytosol. The protein resides in the cell membrane. It localises to the cytoplasmic vesicle membrane. Acts as an actin nucleation factor, remains associated with the slow-growing pointed end of the new filament. Involved in intracellular vesicle transport along actin fibers, providing a novel link between actin cytoskeleton dynamics and intracellular transport. Required for asymmetric spindle positioning and asymmetric cell division during meiosis. Required for normal formation of the cleavage furrow and for polar body extrusion during female germ cell meiosis. Also acts in the nucleus: together with SPIRE1 and SPIRE2, promotes assembly of nuclear actin filaments in response to DNA damage in order to facilitate movement of chromatin and repair factors after DNA damage. This is Protein spire homolog 2 (SPIRE2) from Homo sapiens (Human).